The sequence spans 703 residues: Phenylalanine aminomutase (L-beta-phenylalanine forming) (703 aa).

Tyrosine 79 functions as the Proton donor/acceptor in the catalytic mechanism. The 5-imidazolinone (Ala-Gly) cross-link spans 177–179 (ASG). Serine 178 carries the post-translational modification 2,3-didehydroalanine (Ser).

The protein belongs to the PAL/histidase family. Contains an active site 4-methylidene-imidazol-5-one (MIO), which is formed autocatalytically by cyclization and dehydration of residues Ala-Ser-Gly.

The catalysed reaction is L-phenylalanine = L-beta-phenylalanine. The protein operates within mycotoxin biosynthesis. Functionally, phenylalanine aminomutase; part of the gene cluster that mediates the biosynthesis of the mycotoxin cyclochlorotine, a hepatotoxic and carcinogenic cyclic chlorinated pentapeptide. Within the pathway, cctP1 provides the uncommon building block beta-Phe from Phe. The NRPS cctN initially catalyzes the condensation of L-serine (Ser), Pro, L-2-aminobutyrate (2Abu), Ser, and beta-Phe in this order to produce isocyclotine. After the dichlorination of Pro2 catalyzed by cctP2 to produce isocyclochlorotine, the cctO-mediated transacylation of isocyclochlorotine can furnish cyclochlorotine. The subsequent hydroxylation of cyclochlorotine by cctR yields hydroxycyclochlorotine as the final product. CctP1 probably acts as a phenylalanine aminomutase and provides the uncommon building block beta-Phe. Furthermore, 2Abu can be synthesized from threonine by one of the threonine dehydratases and transaminases localized outside of the cluster. The functions of the remaining proteins encoded by the cluster, cctM and cctT, have not been identified yet. This chain is Phenylalanine aminomutase (L-beta-phenylalanine forming), found in Talaromyces islandicus (Penicillium islandicum).